Consider the following 77-residue polypeptide: Acyl carrier protein (77 aa).

The region spanning 1–76 (MAIFDDVKKV…DVVNYIENLQ (76 aa)) is the Carrier domain. Ser36 carries the O-(pantetheine 4'-phosphoryl)serine modification.

The protein belongs to the acyl carrier protein (ACP) family. 4'-phosphopantetheine is transferred from CoA to a specific serine of apo-ACP by AcpS. This modification is essential for activity because fatty acids are bound in thioester linkage to the sulfhydryl of the prosthetic group.

The protein localises to the cytoplasm. It participates in lipid metabolism; fatty acid biosynthesis. Its function is as follows. Carrier of the growing fatty acid chain in fatty acid biosynthesis. This is Acyl carrier protein from Campylobacter lari (strain RM2100 / D67 / ATCC BAA-1060).